The chain runs to 248 residues: Protein PARTING DANCERS homolog (248 aa).

Residues 1 to 10 (MERSTHSTGW) show a composition bias toward polar residues. The tract at residues 1 to 25 (MERSTHSTGWTCLPPPPPEPAAPGR) is disordered.

The protein belongs to the ERCC1/RAD10/SWI10 family. In terms of assembly, interacts with SHOC1 (via C-terminus). Interacts with HEI10. In terms of tissue distribution, highly expressed in anthers and pistil during meiosis. Expressed in pollen mother cells (PMCs) during meiosis. Expressed at low levels in roots, shoots, leaves, flowers, and glumes.

It is found in the chromosome. It localises to the nucleus. The protein resides in the cytoplasm. The protein localises to the cell membrane. Essential for normal crossover (CO) formation during meiosis. Essential component for the formation of class I meiotic COs. Interacts with SHOC1, another meiotic component, to regulate CO formation, possibly by stabilizing the recombination intermediates during meiosis. PTD and SHOC1 may form transient heterotrimeric or heterotetrameric complexes with HEI10 and/or ZIP4 to promote class I COs formation. Does not seem to be involved in early meiotic recombination steps involving double-strand break (DSB) formation, processing, and single-strand invasion. Does not seem to be involved in homologous pairing or synaptonemal complex (SC) assembly. This chain is Protein PARTING DANCERS homolog, found in Oryza sativa subsp. japonica (Rice).